A 444-amino-acid chain; its full sequence is Trigger factor (444 aa).

The PPIase FKBP-type domain maps to 160–245; it reads DMQVTFDFEG…VKQVEKPKLP (86 aa).

The protein belongs to the FKBP-type PPIase family. Tig subfamily.

The protein localises to the cytoplasm. It carries out the reaction [protein]-peptidylproline (omega=180) = [protein]-peptidylproline (omega=0). Functionally, involved in protein export. Acts as a chaperone by maintaining the newly synthesized protein in an open conformation. Functions as a peptidyl-prolyl cis-trans isomerase. The chain is Trigger factor from Acinetobacter baumannii (strain AB0057).